The following is a 201-amino-acid chain: 3-isopropylmalate dehydratase small subunit (201 aa).

Belongs to the LeuD family. LeuD type 1 subfamily. In terms of assembly, heterodimer of LeuC and LeuD.

It carries out the reaction (2R,3S)-3-isopropylmalate = (2S)-2-isopropylmalate. The protein operates within amino-acid biosynthesis; L-leucine biosynthesis; L-leucine from 3-methyl-2-oxobutanoate: step 2/4. Functionally, catalyzes the isomerization between 2-isopropylmalate and 3-isopropylmalate, via the formation of 2-isopropylmaleate. The sequence is that of 3-isopropylmalate dehydratase small subunit from Cereibacter sphaeroides (strain ATCC 17029 / ATH 2.4.9) (Rhodobacter sphaeroides).